We begin with the raw amino-acid sequence, 521 residues long: Jacalin-related lectin 38 (521 aa).

The F-box domain maps to 2-48; it reads MQPDHDLPYDLEGEILSHLPIQILARFRCVCKRWNTLFKERRFFNSD. Kelch repeat units lie at residues 145-190, 326-373, and 486-521; these read KHYK…PYSV, YIYI…ITQH, and MSFV…SPLP. Residues 377–519 enclose the Jacalin-type lectin domain; the sequence is SRFAPLRGIQ…LTAFGVHFSP (143 aa).

The protein belongs to the jacalin lectin family.

The polypeptide is Jacalin-related lectin 38 (JAL38) (Arabidopsis thaliana (Mouse-ear cress)).